A 384-amino-acid chain; its full sequence is Transcription factor TGA3 (384 aa).

Disordered stretches follow at residues 36-70 (KSDI…NNRV) and 76-95 (YNNS…EDRI). Over residues 39–55 (INNITSNQNNNQSSSTT) the composition is skewed to low complexity. Positions 58-68 (VDARPEADDNN) are enriched in basic and acidic residues. The span at 76-88 (YNNSLEAEPSSNN) shows a compositional bias: polar residues. One can recognise a bZIP domain in the interval 96–138 (NDKMKRRLAQNREAARKSRLRKKAHVQQLEESRLKLSQLEQEL). A basic motif region spans residues 98–118 (KMKRRLAQNREAARKSRLRKK). The Nuclear localization signal motif lies at 99 to 106 (MKRRLAQN). A coiled-coil region spans residues 117–144 (KKAHVQQLEESRLKLSQLEQELVRARQQ). The tract at residues 124 to 138 (LEESRLKLSQLEQEL) is leucine-zipper. The 213-residue stretch at 167 to 379 (IAAFEMEYTH…RALSSLWAAR (213 aa)) folds into the DOG1 domain. The hexadecanoate site is built by Lys-219, Arg-236, and Phe-249. Positions 267–296 (DQQLLEVRNLQQSSQQAEEALSQGLDKLQQ) form a coiled coil.

The protein belongs to the bZIP family. Binds DNA as a dimer. Interacts with NPR3, NPR4 and sumoylated NPR1. Interacts with GRXC7/ROXY1. Expressed in the whole plant.

The protein resides in the nucleus. Its function is as follows. Transcriptional activator that binds specifically to the DNA sequence 5'-TGACG-3'. Recognizes ocs elements like the as-1 motif of the cauliflower mosaic virus 35S promoter. Binding to the as-1-like cis elements mediate auxin- and salicylic acid-inducible transcription. Required to induce the systemic acquired resistance (SAR) via the regulation of pathogenesis-related genes expression. Binding to the as-1 element of PR-1 promoter is salicylic acid-inducible and mediated by sumoylated NPR1. Could also bind to the Hex-motif (5'-TGACGTGG-3') another cis-acting element found in plant histone promoters. The chain is Transcription factor TGA3 from Arabidopsis thaliana (Mouse-ear cress).